Consider the following 208-residue polypeptide: Inosine triphosphate pyrophosphatase (208 aa).

An N-acetylalanine modification is found at Ala-2. 14–19 (TGNAKK) contributes to the ITP binding site. Glu-44 is a binding site for Mg(2+). ITP is bound by residues Lys-56, 72-73 (DT), Lys-89, 149-152 (FGWD), Lys-172, and 177-178 (HR).

The protein belongs to the HAM1 NTPase family. Homodimer. Mg(2+) serves as cofactor. Requires Mn(2+) as cofactor.

The protein localises to the cytoplasm. The catalysed reaction is ITP + H2O = IMP + diphosphate + H(+). It catalyses the reaction dITP + H2O = dIMP + diphosphate + H(+). It carries out the reaction XTP + H2O = XMP + diphosphate + H(+). The enzyme catalyses N(6)-hydroxy-dATP + H2O = N(6)-hydroxy-dAMP + diphosphate + H(+). Functionally, pyrophosphatase that hydrolyzes the non-canonical purine nucleotides inosine triphosphate (ITP), deoxyinosine triphosphate (dITP) as well as 2'-deoxy-N-6-hydroxylaminopurine triphosphate (dHAPTP) and xanthosine 5'-triphosphate (XTP) to their respective monophosphate derivatives. The enzyme does not distinguish between the deoxy- and ribose forms. Probably excludes non-canonical purines from RNA and DNA precursor pools, thus preventing their incorporation into RNA and DNA and avoiding chromosomal lesions. This chain is Inosine triphosphate pyrophosphatase, found in Bos taurus (Bovine).